Reading from the N-terminus, the 217-residue chain is Pro-Pro endopeptidase (217 aa).

A signal peptide spans 1 to 27; that stretch reads MKWDKRVVALILAVMIVCPLFAAPAHA. The ATLF-like domain maps to 30-216; that stretch reads QSILDKLVVL…TYEFMAKLFA (187 aa). The segment at 112 to 115 is plays a crucial role in substrate specificity; it reads SERV. A Zn(2+)-binding site is contributed by H137. E138 serves as the catalytic Proton acceptor. Positions 141, 174, and 181 each coordinate Zn(2+).

Belongs to the peptidase M34 family. Pro-Pro endopeptidase subfamily. As to quaternary structure, monomer. Requires Zn(2+) as cofactor.

The protein resides in the secreted. It catalyses the reaction The enzyme catalyzes the hydrolytic cleavage of peptide bonds between two proline residues.. In terms of biological role, zinc-dependent endoprotease with a unique preference for proline residues surrounding the scissile bond, which cleaves in a PLP-|-PVP motif. Cleaves the cell surface protein encoded by an adjacent gene, which contains two PPEP-2 cleaving sites and putative extracellular matrix-binding domains. Thereby, may have a role in the regulation of P.alvei adhesion. Is not able to cleave within the PVP-|-PVQ motif, and only shows a very poor cleavage of the VNP-|-PVP motif in vitro, which is the optimal substrate peptide for PPEP-1 from P.difficile. The protein is Pro-Pro endopeptidase of Paenibacillus alvei (strain ATCC 6344 / DSM 29 / NBRC 3343 / NCIMB 9371 / NCTC 6352) (Bacillus alvei).